Consider the following 110-residue polypeptide: UPF0060 membrane protein RPA3838 (110 aa).

4 helical membrane-spanning segments follow: residues 4–24 (LLTFCAAALMEIAGCFAFWAW), 31–51 (PLWLIPGMLALALFAYLLTLA), 59–79 (AYAAYGGIYIASALLWGWAIE), and 85–105 (QWDVIGAAICLVGMSVILFGP).

Belongs to the UPF0060 family.

The protein localises to the cell inner membrane. The polypeptide is UPF0060 membrane protein RPA3838 (Rhodopseudomonas palustris (strain ATCC BAA-98 / CGA009)).